The primary structure comprises 376 residues: Pre-mRNA-splicing factor cwf25 (376 aa).

Positions lysine 25–alanine 60 form a coiled coil. Disordered regions lie at residues leucine 153–asparagine 211 and arginine 258–arginine 289. The segment covering methionine 154–serine 167 has biased composition (basic and acidic residues). Residues lysine 168–arginine 178 are compositionally biased toward basic residues. Over residues serine 179–glutamate 199 the composition is skewed to basic and acidic residues. A phosphoserine mark is found at serine 266 and serine 268. Residues isoleucine 286–arginine 334 adopt a coiled-coil conformation.

Belongs to the CWC25 family. Belongs to the 40S cdc5-associated complex (or cwf complex), a spliceosome sub-complex reminiscent of a late-stage spliceosome composed of the U2, U5 and U6 snRNAs and at least brr2, cdc5, cwf2/prp3, cwf3/syf1, cwf4/syf3, cwf5/ecm2, spp42/cwf6, cwf7/spf27, cwf8, cwf9, cwf10, cwf11, cwf12, prp45/cwf13, cwf14, cwf15, cwf16, cwf17, cwf18, cwf19, cwf20, cwf21, cwf22, cwf23, cwf24, cwf25, cwf26, cyp7/cwf27, cwf28, cwf29/ist3, lea1, msl1, prp5/cwf1, prp10, prp12/sap130, prp17, prp22, sap61, sap62, sap114, sap145, slu7, smb1, smd1, smd3, smf1, smg1 and syf2.

Its subcellular location is the nucleus. Involved in mRNA splicing. The polypeptide is Pre-mRNA-splicing factor cwf25 (cwf25) (Schizosaccharomyces pombe (strain 972 / ATCC 24843) (Fission yeast)).